The sequence spans 361 residues: Phospho-N-acetylmuramoyl-pentapeptide-transferase (361 aa).

10 consecutive transmembrane segments (helical) span residues 21–41, 74–94, 97–117, 132–152, 168–188, 199–219, 239–259, 264–284, 288–308, and 339–359; these read YLTV…LWIG, MGGI…ANLA, YVWF…VDDY, WKYF…YAIG, VMPQ…VGTG, GLAI…AWAT, LVIF…FNTY, FMGD…AVLV, FLLV…ILQV, and VIIR…ITLK.

Belongs to the glycosyltransferase 4 family. MraY subfamily. The cofactor is Mg(2+).

Its subcellular location is the cell inner membrane. It catalyses the reaction UDP-N-acetyl-alpha-D-muramoyl-L-alanyl-gamma-D-glutamyl-meso-2,6-diaminopimeloyl-D-alanyl-D-alanine + di-trans,octa-cis-undecaprenyl phosphate = di-trans,octa-cis-undecaprenyl diphospho-N-acetyl-alpha-D-muramoyl-L-alanyl-D-glutamyl-meso-2,6-diaminopimeloyl-D-alanyl-D-alanine + UMP. The protein operates within cell wall biogenesis; peptidoglycan biosynthesis. Catalyzes the initial step of the lipid cycle reactions in the biosynthesis of the cell wall peptidoglycan: transfers peptidoglycan precursor phospho-MurNAc-pentapeptide from UDP-MurNAc-pentapeptide onto the lipid carrier undecaprenyl phosphate, yielding undecaprenyl-pyrophosphoryl-MurNAc-pentapeptide, known as lipid I. This is Phospho-N-acetylmuramoyl-pentapeptide-transferase from Histophilus somni (strain 129Pt) (Haemophilus somnus).